The sequence spans 147 residues: Calmodulin (147 aa).

4 consecutive EF-hand domains span residues 8–43, 44–79, 81–116, and 120–147; these read EQIA…LGLS, PSEA…QLKC, DSEQ…IGEK, and AEVD…LLSK. Positions 21, 23, 25, 27, 32, 57, 59, 61, 68, 94, 96, 98, and 105 each coordinate Ca(2+).

This sequence belongs to the calmodulin family.

In terms of biological role, calmodulin mediates the control of a large number of enzymes, ion channels and other proteins by Ca(2+). Among the enzymes to be stimulated by the calmodulin-Ca(2+) complex are a number of protein kinases and phosphatases. The chain is Calmodulin (CMD1) from Kluyveromyces lactis (strain ATCC 8585 / CBS 2359 / DSM 70799 / NBRC 1267 / NRRL Y-1140 / WM37) (Yeast).